The primary structure comprises 113 residues: RING-box protein 2 (113 aa).

The tract at residues 1 to 26 (MADVEDGEEPCVLSSHSGSAGSKSGG) is disordered. A2 carries the N-acetylalanine modification. Zn(2+) contacts are provided by C50, C53, C61, C64, C73, C80, H82, H85, C87, C88, C99, and C102. The RING-type zinc finger occupies 61–103 (CLRCQAENKQEDCVVVWGECNHSFHNCCMSLWVKQNNRCPLCQ).

It belongs to the RING-box family. As to quaternary structure, catalytic component of multiple cullin-5-RING E3 ubiquitin-protein ligase complexes (ECS complexes, also named CRL5 complexes) composed of CUL5, Elongin BC (ELOB and ELOC), RNF7/RBX2 and a variable SOCS box domain-containing protein as substrate-specific recognition component. Also interacts (with lower preference) with CUL1, CUL2, CUL3, CUL4A and CUL4B; additional evidence is however required to confirm this result in vivo. Interacts with UBE2F. Interacts with CSNK2B, the interaction is not affected by phosphorylation by CK2. May also interact with DCUN1D1, DCUN1D2, DCUN1D3, DCUN1D4 and DCUN1D5.

It is found in the cytoplasm. The protein resides in the nucleus. The catalysed reaction is S-ubiquitinyl-[E2 ubiquitin-conjugating enzyme]-L-cysteine + [acceptor protein]-L-lysine = [E2 ubiquitin-conjugating enzyme]-L-cysteine + N(6)-ubiquitinyl-[acceptor protein]-L-lysine.. The enzyme catalyses S-[NEDD8-protein]-yl-[E2 NEDD8-conjugating enzyme]-L-cysteine + [cullin]-L-lysine = [E2 NEDD8-conjugating enzyme]-L-cysteine + N(6)-[NEDD8-protein]-yl-[cullin]-L-lysine.. It functions in the pathway protein modification; protein ubiquitination. The protein operates within protein modification; protein neddylation. Catalytic component of multiple cullin-5-RING E3 ubiquitin-protein ligase complexes (ECS complexes), which mediate the ubiquitination and subsequent proteasomal degradation of target proteins. It is thereby involved in various biological processes, such as cell cycle progression, signal transduction and transcription. The functional specificity of the E3 ubiquitin-protein ligase ECS complexes depend on the variable SOCS box-containing substrate recognition component. Within ECS complexes, RNF7/RBX2 recruits the E2 ubiquitination enzyme to the complex via its RING-type and brings it into close proximity to the substrate. Catalytic subunit of various SOCS-containing ECS complexes, such as the ECS(SOCS7) complex, that regulate reelin signaling by mediating ubiquitination and degradation of DAB1. The ECS(SOCS2) complex mediates the ubiquitination and subsequent proteasomal degradation of phosphorylated EPOR and GHR. Promotes ubiquitination and degradation of NF1, thereby regulating Ras protein signal transduction. As part of the ECS(ASB9) complex, catalyzes ubiquitination and degradation of CKB. The ECS(SPSB3) complex catalyzes ubiquitination of nuclear CGAS. As part of the ECS(RAB40C) complex, mediates ANKRD28 ubiquitination and degradation, thereby inhibiting protein phosphatase 6 (PP6) complex activity and focal adhesion assembly during cell migration. As part of some ECS complex, catalyzes 'Lys-11'-linked ubiquitination and degradation of BTRC. ECS complexes and ARIH2 collaborate in tandem to mediate ubiquitination of target proteins; ARIH2 mediating addition of the first ubiquitin on CRLs targets. Specifically catalyzes the neddylation of CUL5 via its interaction with UBE2F. Does not catalyze neddylation of other cullins (CUL1, CUL2, CUL3, CUL4A or CUL4B). May play a role in protecting cells from apoptosis induced by redox agents. The polypeptide is RING-box protein 2 (Mus musculus (Mouse)).